The sequence spans 565 residues: Arginine--tRNA ligase (565 aa).

Residues 126–136 (ANPTGPLHIGH) carry the 'HIGH' region motif.

The protein belongs to the class-I aminoacyl-tRNA synthetase family. In terms of assembly, monomer.

It localises to the cytoplasm. It catalyses the reaction tRNA(Arg) + L-arginine + ATP = L-arginyl-tRNA(Arg) + AMP + diphosphate. This Wolbachia sp. subsp. Brugia malayi (strain TRS) protein is Arginine--tRNA ligase.